The primary structure comprises 184 residues: Ribosome-recycling factor (184 aa).

Belongs to the RRF family.

The protein resides in the cytoplasm. Functionally, responsible for the release of ribosomes from messenger RNA at the termination of protein biosynthesis. May increase the efficiency of translation by recycling ribosomes from one round of translation to another. The chain is Ribosome-recycling factor from Clostridium botulinum (strain Loch Maree / Type A3).